Consider the following 122-residue polypeptide: Double-headed protease inhibitor, submandibular gland (122 aa).

Kazal-like domains follow at residues 10 to 70 and 71 to 121; these read GGRK…NCDI and ECTQ…QCES. Cystine bridges form between Cys16/Cys50, Cys28/Cys47, Cys36/Cys68, Cys72/Cys101, Cys79/Cys98, and Cys87/Cys119.

The protein localises to the secreted. Functionally, this inhibitor is composed of two homologous actively inhibiting halves: one which inhibits trypsin, the other which inhibits elastase. This chain is Double-headed protease inhibitor, submandibular gland, found in Meles meles (Eurasian badger).